The sequence spans 119 residues: Ribonuclease P protein component (119 aa).

The protein belongs to the RnpA family. In terms of assembly, consists of a catalytic RNA component (M1 or rnpB) and a protein subunit.

The enzyme catalyses Endonucleolytic cleavage of RNA, removing 5'-extranucleotides from tRNA precursor.. RNaseP catalyzes the removal of the 5'-leader sequence from pre-tRNA to produce the mature 5'-terminus. It can also cleave other RNA substrates such as 4.5S RNA. The protein component plays an auxiliary but essential role in vivo by binding to the 5'-leader sequence and broadening the substrate specificity of the ribozyme. In Dictyoglomus turgidum (strain DSM 6724 / Z-1310), this protein is Ribonuclease P protein component.